We begin with the raw amino-acid sequence, 475 residues long: tRNA modification GTPase MnmE (475 aa).

Positions 24, 81, and 124 each coordinate (6S)-5-formyl-5,6,7,8-tetrahydrofolate. One can recognise a TrmE-type G domain in the interval 220–397 (GLSVVLAGQP…MRSELLRLIG (178 aa)). Residue Asn230 coordinates K(+). GTP-binding positions include 230–235 (NVGKSS), 249–255 (TPIAGTT), 274–277 (DTAG), and 378–380 (SAR). A Mg(2+)-binding site is contributed by Ser234. Thr249, Ile251, and Thr254 together coordinate K(+). Thr255 contributes to the Mg(2+) binding site. Lys475 is a (6S)-5-formyl-5,6,7,8-tetrahydrofolate binding site.

The protein belongs to the TRAFAC class TrmE-Era-EngA-EngB-Septin-like GTPase superfamily. TrmE GTPase family. Homodimer. Heterotetramer of two MnmE and two MnmG subunits. K(+) serves as cofactor.

The protein resides in the cytoplasm. Exhibits a very high intrinsic GTPase hydrolysis rate. Involved in the addition of a carboxymethylaminomethyl (cmnm) group at the wobble position (U34) of certain tRNAs, forming tRNA-cmnm(5)s(2)U34. The polypeptide is tRNA modification GTPase MnmE (Cupriavidus metallidurans (strain ATCC 43123 / DSM 2839 / NBRC 102507 / CH34) (Ralstonia metallidurans)).